The sequence spans 204 residues: Inner membrane protein YagU (204 aa).

The Periplasmic portion of the chain corresponds to 1-14 (MNIFEQTPPNRRRY). Residues 15 to 35 (GLAAFIGLIAGVVSAFVKWGA) traverse the membrane as a helical segment. The Cytoplasmic segment spans residues 36-100 (EVPLPPRSPV…VYTFAGHVFN (65 aa)). Residues 101–121 (WVGVTHIIFSIVFAVGYCVVA) traverse the membrane as a helical segment. The Periplasmic portion of the chain corresponds to 122–132 (EVFPKIKLWQG). The chain crosses the membrane as a helical span at residues 133 to 153 (LLAGALAQLFVHMISFPLMGL). The Cytoplasmic segment spans residues 154–204 (TPPLFDLPWYENVSEIFGHLVWFWSIEIIRRDLRNRITHEPDPEIPLGSNR).

In terms of assembly, homodimer.

It localises to the cell inner membrane. In Escherichia coli (strain K12), this protein is Inner membrane protein YagU (yagU).